A 440-amino-acid polypeptide reads, in one-letter code: tRNA(Ile)-lysidine synthase (440 aa).

25-30 (SGGVDS) provides a ligand contact to ATP.

It belongs to the tRNA(Ile)-lysidine synthase family.

The protein localises to the cytoplasm. The catalysed reaction is cytidine(34) in tRNA(Ile2) + L-lysine + ATP = lysidine(34) in tRNA(Ile2) + AMP + diphosphate + H(+). Ligates lysine onto the cytidine present at position 34 of the AUA codon-specific tRNA(Ile) that contains the anticodon CAU, in an ATP-dependent manner. Cytidine is converted to lysidine, thus changing the amino acid specificity of the tRNA from methionine to isoleucine. The protein is tRNA(Ile)-lysidine synthase of Vibrio cholerae serotype O1 (strain ATCC 39541 / Classical Ogawa 395 / O395).